A 575-amino-acid chain; its full sequence is Alpha-(1,6)-fucosyltransferase (575 aa).

The Cytoplasmic segment spans residues 1-9; it reads MRPWTGSWR. The helical; Signal-anchor for type II membrane protein transmembrane segment at 10 to 30 threads the bilayer; that stretch reads WIMLILFAWGTLLFYIGGHLV. Over 31 to 575 the chain is Lumenal; the sequence is RDNDHPDHSS…KYPTYPEAEK (545 aa). 3 disulfide bridges follow: Cys-204/Cys-266, Cys-212/Cys-230, and Cys-218/Cys-222. In terms of domain architecture, GT23 spans 206 to 493; sequence KAKKLVCNIN…PDASANFHSL (288 aa). Ser-278 is subject to Phosphoserine. Residues 299–305 carry the SH3-binding motif; it reads PRPPYLP. Residues 365–366 are important for donor substrate binding; that stretch reads RR. A disulfide bridge links Cys-465 with Cys-472. In terms of domain architecture, SH3 spans 502 to 563; that stretch reads QNAHNQIAIY…PSYKVREKIE (62 aa).

This sequence belongs to the glycosyltransferase 23 family. In terms of processing, tyrosine phosphorylated by PKDCC/VLK.

The protein localises to the golgi apparatus. It localises to the golgi stack membrane. The enzyme catalyses N(4)-{beta-D-GlcNAc-(1-&gt;2)-alpha-D-Man-(1-&gt;3)-[beta-D-GlcNAc-(1-&gt;2)-alpha-D-Man-(1-&gt;6)]-beta-D-Man-(1-&gt;4)-beta-D-GlcNAc-(1-&gt;4)-beta-D-GlcNAc}-L-asparaginyl-[protein] + GDP-beta-L-fucose = an N(4)-{beta-D-GlcNAc-(1-&gt;2)-alpha-D-Man-(1-&gt;3)-[beta-D-GlcNAc-(1-&gt;2)-alpha-D-Man-(1-&gt;6)]-beta-D-Man-(1-&gt;4)-beta-D-GlcNAc-(1-&gt;4)-[alpha-L-Fuc-(1-&gt;6)]-beta-D-GlcNAc}-L-asparaginyl-[protein] + GDP + H(+). Its pathway is protein modification; protein glycosylation. Its function is as follows. Catalyzes the addition of fucose in alpha 1-6 linkage to the first GlcNAc residue, next to the peptide chains in N-glycans. The protein is Alpha-(1,6)-fucosyltransferase (FUT8) of Homo sapiens (Human).